Reading from the N-terminus, the 668-residue chain is Golgin subfamily A member 6-like protein 1 (668 aa).

5 disordered regions span residues 1–120 (MLMW…HQEA), 323–356 (IREQEEKIREQEEKMRRQEEMMWEKEEKMRRQEE), 384–466 (EKMH…EMWR), 481–591 (KEKM…REQE), and 603–639 (EQEEMMQEQEEKMWEQEEKMCEQEEKMQEQEEKMRRQ). Residues 15–41 (LPTHPHLPTHPHLPTHPHLPTHPHLPT) show a composition bias toward basic residues. Positions 51–72 (MSKETRQSKLAEAKEQLTDHHP) are enriched in basic and acidic residues. Polar residues-rich tracts occupy residues 73–83 (QTNPSVGTAAS) and 91–103 (NNGTNPETTTSGG). The span at 106 to 120 (SPEDEQKASHQHQEA) shows a compositional bias: basic and acidic residues. Positions 177-663 (LEQALSAVAT…EEKMQEHQEH (487 aa)) form a coiled coil.

This sequence belongs to the GOLGA6 family.

The protein is Golgin subfamily A member 6-like protein 1 (GOLGA6L1) of Homo sapiens (Human).